Here is a 277-residue protein sequence, read N- to C-terminus: Probable redox regulatory protein ML2435 (277 aa).

This sequence belongs to the Rv0495c family.

Its function is as follows. Essential for maintaining intracellular redox homeostasis. This Mycobacterium leprae (strain TN) protein is Probable redox regulatory protein ML2435.